Here is a 305-residue protein sequence, read N- to C-terminus: Aurora/IPL1-related protein kinase 2 (305 aa).

A Protein kinase domain is found at 30–280; sequence FEIGRPLGKG…LEQVKEHYWI (251 aa). ATP contacts are provided by residues 36–44 and K59; that span reads LGKGKFGSV. D153 serves as the catalytic Proton acceptor.

The protein belongs to the protein kinase superfamily. Ser/Thr protein kinase family. Aurora subfamily. Component of the CPC complex which consists of icp-1; csc-1; bir-1 and air-2. Within the complex, interacts with icp-1; csc-1 and bir-1. Interacts with zen-4. Interacts with tlk-1 and bmk-1. Phosphorylated. Increased phosphorylation upon chromatin obstructions at anaphase.

The protein localises to the cytoplasm. It is found in the cytoskeleton. Its subcellular location is the chromosome. The protein resides in the midbody. It localises to the spindle. The catalysed reaction is L-seryl-[protein] + ATP = O-phospho-L-seryl-[protein] + ADP + H(+). It catalyses the reaction L-threonyl-[protein] + ATP = O-phospho-L-threonyl-[protein] + ADP + H(+). Functionally, serine/threonine-protein kinase component of the chromosomal passenger complex (CPC), a complex that acts as a key regulator of chromosome segregation and cytokinesis. The CPC complex has essential functions at the centromere in ensuring correct chromosome alignment and segregation. Required for histone H3 phosphorylation during segregation of homologous chromosomes in meiosis and mitosis. Required for histone H3 'Ser-10' phosphorylation. Phosphorylates tlk-1 at 'Ser-634', which enhances its activity. Phosphorylates zen-4 at 'Ser-680'. Required for the recruitment of bub-1 to the ring-shaped domain between chromosomes during meiotic anaphase I. Also required for the localization of the condensin I complex subunit smc-4 to mitotic chromosomes. Acts at the spindle midzone and the midbody to prevent cleavage furrow regression upon chromatin obstructions during cytokinesis. This chain is Aurora/IPL1-related protein kinase 2, found in Caenorhabditis elegans.